Here is a 117-residue protein sequence, read N- to C-terminus: Large ribosomal subunit protein bL20 (117 aa).

The protein belongs to the bacterial ribosomal protein bL20 family.

Binds directly to 23S ribosomal RNA and is necessary for the in vitro assembly process of the 50S ribosomal subunit. It is not involved in the protein synthesizing functions of that subunit. This is Large ribosomal subunit protein bL20 from Histophilus somni (strain 129Pt) (Haemophilus somnus).